Consider the following 441-residue polypeptide: BTB/POZ domain-containing protein At2g24240 (441 aa).

Positions 6-76 (DRIKFNVGGR…LRTGDLNVPA (71 aa)) constitute a BTB domain.

It participates in protein modification; protein ubiquitination. May act as a substrate-specific adapter of an E3 ubiquitin-protein ligase complex (CUL3-RBX1-BTB) which mediates the ubiquitination and subsequent proteasomal degradation of target proteins. The polypeptide is BTB/POZ domain-containing protein At2g24240 (Arabidopsis thaliana (Mouse-ear cress)).